A 600-amino-acid chain; its full sequence is UvrABC system protein C (600 aa).

Positions 15–92 constitute a GIY-YIG domain; it reads DKPGCYLMKD…IKKYQPYYNV (78 aa). One can recognise a UVR domain in the interval 197 to 232; the sequence is AQVKQDLTEKMTQASMDLEFERAAEIRDQLKYIEQT.

This sequence belongs to the UvrC family. As to quaternary structure, interacts with UvrB in an incision complex.

Its subcellular location is the cytoplasm. In terms of biological role, the UvrABC repair system catalyzes the recognition and processing of DNA lesions. UvrC both incises the 5' and 3' sides of the lesion. The N-terminal half is responsible for the 3' incision and the C-terminal half is responsible for the 5' incision. This is UvrABC system protein C from Lactobacillus johnsonii (strain CNCM I-12250 / La1 / NCC 533).